A 110-amino-acid chain; its full sequence is UPF0060 membrane protein Haur_1798 (110 aa).

Helical transmembrane passes span 7–27 (VVLF…VWQW), 33–53 (SIWF…LPTL), 63–83 (VYAA…WLID), and 89–109 (QPSL…LYWP).

The protein belongs to the UPF0060 family.

It is found in the cell membrane. The protein is UPF0060 membrane protein Haur_1798 of Herpetosiphon aurantiacus (strain ATCC 23779 / DSM 785 / 114-95).